The following is a 604-amino-acid chain: Protein TAX4 (604 aa).

Disordered regions lie at residues 38–77 (HPNG…PRSI), 133–249 (FSNR…RQQE), 267–300 (GTLP…QENL), 338–380 (DETF…KGLK), and 394–428 (PFPH…NEDK). The segment covering 176 to 185 (YDNNVRSRSI) has biased composition (polar residues). Low complexity-rich tracts occupy residues 186–203 (SPQV…SISS) and 224–240 (SMSS…KASL). Composition is skewed to basic residues over residues 276 to 290 (SQRK…HKLL), 366 to 379 (KKKK…KKGL), and 396 to 421 (PHHH…HTSS). In terms of domain architecture, EH spans 469–559 (ANEDDESHLQ…RVWNSVDGYV (91 aa)).

This sequence belongs to the IRS4 family. As to quaternary structure, interacts with INP51.

Functionally, with IRS4, acts as a positive regulator of INP51 activity and phosphatidylinositol 4,5-bisphosphate turnover. Negatively regulates signaling through the cell integrity pathway, including the MAP kinase SLT2. This is Protein TAX4 (TAX4) from Saccharomyces cerevisiae (strain YJM789) (Baker's yeast).